We begin with the raw amino-acid sequence, 334 residues long: Nucleoid-associated protein PFL_1060 (334 aa).

It belongs to the YejK family.

It is found in the cytoplasm. Its subcellular location is the nucleoid. The polypeptide is Nucleoid-associated protein PFL_1060 (Pseudomonas fluorescens (strain ATCC BAA-477 / NRRL B-23932 / Pf-5)).